A 93-amino-acid polypeptide reads, in one-letter code: RNA-binding protein Hfq (93 aa).

One can recognise a Sm domain in the interval 9–68 (DPFLNALRKERIPVSIFLVNGIKLQGQIESFDQYVVLLKNAVSQMVYKHAISTVVPARNP). Over residues 74–86 (PAMAAGATAAPAA) the composition is skewed to low complexity. The segment at 74–93 (PAMAAGATAAPAADEGYGNQ) is disordered.

The protein belongs to the Hfq family. As to quaternary structure, homohexamer.

Its function is as follows. RNA chaperone that binds small regulatory RNA (sRNAs) and mRNAs to facilitate mRNA translational regulation in response to envelope stress, environmental stress and changes in metabolite concentrations. Also binds with high specificity to tRNAs. The sequence is that of RNA-binding protein Hfq from Alcanivorax borkumensis (strain ATCC 700651 / DSM 11573 / NCIMB 13689 / SK2).